The primary structure comprises 186 residues: Archaemetzincin (186 aa).

His136 is a binding site for Zn(2+). Glu137 functions as the Proton acceptor in the catalytic mechanism. Zn(2+) contacts are provided by His140, His146, Cys147, Cys152, Cys171, and Cys174.

The protein belongs to the peptidase M54 family. In terms of assembly, monomer. It depends on Zn(2+) as a cofactor.

In terms of biological role, probable zinc metalloprotease whose natural substrate is unknown. In Thermococcus kodakarensis (strain ATCC BAA-918 / JCM 12380 / KOD1) (Pyrococcus kodakaraensis (strain KOD1)), this protein is Archaemetzincin.